Consider the following 125-residue polypeptide: Cystatin-like cysteine protease inhibitor EPIC2A (125 aa).

The first 21 residues, 1-21 (MSFLRPTLALLAVTALVTTSA), serve as a signal peptide directing secretion. An N-linked (GlcNAc...) asparagine glycan is attached at Asn45. A Secondary area of contact motif is present at residues 68 to 72 (QVVSG).

It belongs to the cystatin family.

It is found in the secreted. Secreted effector that interacts with and inhibits host apoplastic pathogenesis-related papain-like cysteine proteases. Inhibition of host proteases by a pathogen extracellular protease inhibitor forms a specific type of defense-counterdefense mechanism between plants and microbial pathogens. The protein is Cystatin-like cysteine protease inhibitor EPIC2A of Phytophthora infestans (strain T30-4) (Potato late blight agent).